A 137-amino-acid chain; its full sequence is Altered inheritance of mitochondria protein 11 (137 aa).

2 consecutive transmembrane segments (helical) span residues 20 to 37 (YGAA…SRAI) and 66 to 88 (LTYA…CWAL).

Belongs to the AIM11 family.

The protein resides in the membrane. This Saccharomyces cerevisiae (strain YJM789) (Baker's yeast) protein is Altered inheritance of mitochondria protein 11 (AIM11).